Reading from the N-terminus, the 539-residue chain is Eukaryotic translation initiation factor 3 subunit L (539 aa).

One can recognise a PCI domain in the interval 306–514; it reads TFSDILLYIQ…IHIADTKVSH (209 aa).

Belongs to the eIF-3 subunit L family. In terms of assembly, component of the eukaryotic translation initiation factor 3 (eIF-3) complex. The eIF-3 complex interacts with pix.

The protein resides in the cytoplasm. Its function is as follows. Component of the eukaryotic translation initiation factor 3 (eIF-3) complex, which is involved in protein synthesis of a specialized repertoire of mRNAs and, together with other initiation factors, stimulates binding of mRNA and methionyl-tRNAi to the 40S ribosome. The eIF-3 complex specifically targets and initiates translation of a subset of mRNAs involved in cell proliferation. The chain is Eukaryotic translation initiation factor 3 subunit L from Drosophila ananassae (Fruit fly).